A 307-amino-acid polypeptide reads, in one-letter code: Ribosomal RNA small subunit methyltransferase H (307 aa).

S-adenosyl-L-methionine contacts are provided by residues 32 to 34 (GGH), aspartate 52, phenylalanine 78, aspartate 100, and glutamine 107.

The protein belongs to the methyltransferase superfamily. RsmH family.

It is found in the cytoplasm. It catalyses the reaction cytidine(1402) in 16S rRNA + S-adenosyl-L-methionine = N(4)-methylcytidine(1402) in 16S rRNA + S-adenosyl-L-homocysteine + H(+). Its function is as follows. Specifically methylates the N4 position of cytidine in position 1402 (C1402) of 16S rRNA. The sequence is that of Ribosomal RNA small subunit methyltransferase H from Coxiella burnetii (strain Dugway 5J108-111).